Consider the following 744-residue polypeptide: Catalase-peroxidase 3 (744 aa).

Residues 106 to 228 (WHFAGTYRIG…LAASEMGLIY (123 aa)) constitute a cross-link (tryptophyl-tyrosyl-methioninium (Trp-Tyr) (with M-254)). His107 functions as the Proton acceptor in the catalytic mechanism. A cross-link (tryptophyl-tyrosyl-methioninium (Tyr-Met) (with W-106)) is located at residues 228-254 (YVDPQGPATLPDPLASARDIRETFRRM). Heme b is bound at residue His269.

It belongs to the peroxidase family. Peroxidase/catalase subfamily. In terms of assembly, homodimer or homotetramer. Heme b serves as cofactor. Post-translationally, formation of the three residue Trp-Tyr-Met cross-link is important for the catalase, but not the peroxidase activity of the enzyme.

It catalyses the reaction H2O2 + AH2 = A + 2 H2O. The catalysed reaction is 2 H2O2 = O2 + 2 H2O. Its function is as follows. Bifunctional enzyme with both catalase and broad-spectrum peroxidase activity. The polypeptide is Catalase-peroxidase 3 (Mycolicibacterium smegmatis (strain ATCC 700084 / mc(2)155) (Mycobacterium smegmatis)).